We begin with the raw amino-acid sequence, 416 residues long: Formyl-CoA:oxalate CoA-transferase (416 aa).

Residues 17–18 (QS), arginine 38, 72–75 (LNTK), 96–98 (NFH), histidine 104, and 137–140 (KAYE) contribute to the CoA site. The Nucleophile role is filled by aspartate 169. 248 to 250 (GGQ) serves as a coordination point for substrate. 273–275 (QEQ) is a binding site for CoA.

It belongs to the CoA-transferase III family. Frc subfamily. In terms of assembly, homodimer.

The enzyme catalyses formyl-CoA + oxalate = oxalyl-CoA + formate. It participates in metabolic intermediate degradation; oxalate degradation; CO(2) and formate from oxalate: step 1/2. Its function is as follows. Involved in the catabolism of oxalate and in the adapatation to low pH via the induction of the oxalate-dependent acid tolerance response (ATR). Catalyzes the transfer of the CoA moiety from formyl-CoA to oxalate. In Escherichia coli O81 (strain ED1a), this protein is Formyl-CoA:oxalate CoA-transferase.